The chain runs to 465 residues: MLPLVALVGRPNVGKSTIFNALTRTRDALVHDQPGVTRDRNYGVCRLDEDNHFLVVDTGGIAEEEEGLAGATTRQARAAAAEADLILFVVDARDGSSAMDDEILAWLRKLSRPTLLLINKIDGTDEDSVRSEFARYGFSEMLTVSAAHRQGLDDLLEEVVQRLPEEGSGEELDNDPNRIRIAFVGRPNVGKSTLVNRILGEERMIASDVPGTTRDSIAVDLERDGREYRLIDTAGLRRRSRVDEVVEKFSVVKTMQSIEQCQVAVLMLDATEGVTDQDATVLGAVLDAGRALVIAINKWDGLTEYQREQAETMLSLRLGFVPWAESVRISAKHGSGLRELFRAVHRAHESANKTFTTSEVNKALEVAYETNPPPTIRGHVSKLRYVHPAGANPPTFIVHGTRLKELQESYKRYLENFFRKRFKLIGTPVSFIFREGTNPYEGKKNVLTERQVKAKRRLMKHVKGK.

2 EngA-type G domains span residues 3–167 and 179–352; these read PLVA…PEEG and IRIA…ESAN. GTP contacts are provided by residues 9-16, 57-61, 119-122, 185-192, 232-236, and 297-300; these read GRPNVGKS, DTGGI, NKID, DTAGL, and NKWD. Residues 353–437 form the KH-like domain; it reads KTFTTSEVNK…PVSFIFREGT (85 aa).

It belongs to the TRAFAC class TrmE-Era-EngA-EngB-Septin-like GTPase superfamily. EngA (Der) GTPase family. In terms of assembly, associates with the 50S ribosomal subunit.

Functionally, GTPase that plays an essential role in the late steps of ribosome biogenesis. The protein is GTPase Der of Stenotrophomonas maltophilia (strain R551-3).